Reading from the N-terminus, the 183-residue chain is Hypoxanthine/guanine phosphoribosyltransferase (183 aa).

The protein belongs to the purine/pyrimidine phosphoribosyltransferase family. Archaeal HPRT subfamily. As to quaternary structure, homodimer.

It is found in the cytoplasm. It carries out the reaction IMP + diphosphate = hypoxanthine + 5-phospho-alpha-D-ribose 1-diphosphate. It catalyses the reaction GMP + diphosphate = guanine + 5-phospho-alpha-D-ribose 1-diphosphate. Its pathway is purine metabolism; IMP biosynthesis via salvage pathway; IMP from hypoxanthine: step 1/1. Catalyzes a salvage reaction resulting in the formation of IMP that is energically less costly than de novo synthesis. The protein is Hypoxanthine/guanine phosphoribosyltransferase of Methanocaldococcus infernus (strain DSM 11812 / JCM 15783 / ME).